The sequence spans 251 residues: MILYEYPFNERIRTLLRLEDLFERFTFFVAQEDAREHHVALTTLFEISEVAGRADLKSDLMKELERQRQTLAPFRGNPGIEQNALEAVLGEIEQTLANLAQMQGKTGQHLIDNEWLASIRSRAVIPGGTCKFDLPSYYAWQQWPAEQRRQDIAKWSMPLLPLRDAAMIVLRLARESGQASKVMAMQGSYQQMLSGRTYQLMQVRVPPELRVIPEASANKYMLWVRFTAQDGDVRPRAVDIDVPFQLTLCNL.

This sequence belongs to the ZapD family. Interacts with FtsZ.

It is found in the cytoplasm. In terms of biological role, cell division factor that enhances FtsZ-ring assembly. Directly interacts with FtsZ and promotes bundling of FtsZ protofilaments, with a reduction in FtsZ GTPase activity. The polypeptide is Cell division protein ZapD (Burkholderia thailandensis (strain ATCC 700388 / DSM 13276 / CCUG 48851 / CIP 106301 / E264)).